A 918-amino-acid chain; its full sequence is Rap guanine nucleotide exchange factor 3 (918 aa).

Residue Ser-79 is modified to Phosphoserine. Residues 110–186 (ATYPTLIRDR…RDAQFYRFPG (77 aa)) enclose the DEP domain. An interaction with PDE3B region spans residues 218–242 (TVALRKPPGQRTDEELDLIFEELLH). Residues 311–314 (GQLA) and 321–322 (RA) each bind 3',5'-cyclic AMP. A disordered region spans residues 369 to 388 (TSQGAGPSRPPTPGRNRYTV). An N-terminal Ras-GEF domain is found at 384-521 (NRYTVMSGTP…EQYPERRRHH (138 aa)). Positions 398 to 422 (ELLLEAMRPDSSAHDPTETFLSDFL) are interaction with PDE3B. Residues Ser-531 and Ser-859 each carry the phosphoserine modification. Positions 665–884 (SAKDLAGQLT…SRISTCSEQS (220 aa)) constitute a Ras-GEF domain.

Interacts with PDE3B and PIK3R6; form a signaling complex that regulates phosphatidylinositol 3-kinase gamma in angiogenesis.

It localises to the cytoplasm. The protein localises to the membrane. Functionally, guanine nucleotide exchange factor (GEF) for RAP1A and RAP2A small GTPases that is activated by binding cAMP. Through simultaneous binding of PDE3B to RAPGEF3 and PIK3R6 is assembled in a signaling complex in which it activates the PI3K gamma complex and which is involved in angiogenesis. Plays a role in the modulation of the cAMP-induced dynamic control of endothelial barrier function through a pathway that is independent on Rho-mediated signaling. Required for the actin rearrangement at cell-cell junctions, such as stress fibers and junctional actin. The chain is Rap guanine nucleotide exchange factor 3 (Rapgef3) from Mus musculus (Mouse).